The sequence spans 566 residues: MOB kinase activator-like 2 (566 aa).

Disordered stretches follow at residues 28-57 (ADAT…SSLS) and 74-118 (GRAV…GAQA). Positions 35–57 (SSTAPQTPTASTPRPSSSHSSLS) are enriched in low complexity. A compositionally biased stretch (gly residues) spans 85-115 (QNGGKGNASGAGGGAGGGGAGGASGGTGGTG). Zn(2+) is bound by residues cysteine 209, cysteine 214, histidine 289, and histidine 294. Disordered stretches follow at residues 346-407 (GGCQ…SASA) and 498-541 (FSNN…QCNA). The span at 367–388 (LQHQSLQQQQQHHNSSSNSTSS) shows a compositional bias: low complexity. Positions 394–407 (VNSQSNNGSTSASA) are enriched in polar residues. Low complexity predominate over residues 498 to 507 (FSNNNNNNHN). Residues 508-526 (LNHHHHHHHHHGHHGHHHA) are compositionally biased toward basic residues.

The protein belongs to the MOB1/phocein family. In terms of assembly, interacts with and activates trc, also interacts with wts.

It localises to the cytoplasm. It is found in the nucleus. Required for the normal morphogenesis of a variety of polarized outgrowths including epidermal hairs, bristles, arista laterals, and dendrites. The polypeptide is MOB kinase activator-like 2 (Mob2) (Drosophila melanogaster (Fruit fly)).